The following is an 892-amino-acid chain: DNA mismatch repair protein MutS (892 aa).

Residue 607 to 614 participates in ATP binding; sequence GPNMSGKS. Residues 826–854 are disordered; sequence ETKAETEEESQLSFFGGEQSSKKQDKPVL. Basic and acidic residues predominate over residues 845–854; sequence SSKKQDKPVL.

This sequence belongs to the DNA mismatch repair MutS family.

Its function is as follows. This protein is involved in the repair of mismatches in DNA. It is possible that it carries out the mismatch recognition step. This protein has a weak ATPase activity. The polypeptide is DNA mismatch repair protein MutS (Bacillus cereus (strain AH187)).